We begin with the raw amino-acid sequence, 1129 residues long: Regulator of nonsense transcripts 1 (1129 aa).

Residues 1–415 (MSVEAYGPSS…LRSSVGAPVE (415 aa)) form a sufficient for interaction with RENT2 region. Phosphoserine occurs at positions 10 and 31. The segment at 39–70 (TLPSQTQTPPGGPGGPGGGGAGGPGGAGAGAA) is disordered. Residues 52-69 (GGPGGGGAGGPGGAGAGA) show a composition bias toward gly residues. Residues 115-272 (TKDLPIHACS…NKLEELWKEN (158 aa)) form the Upf1 CH-rich domain. Zn(2+)-binding residues include cysteine 123, cysteine 126, cysteine 137, serine 140, cysteine 145, histidine 155, histidine 159, cysteine 165, cysteine 183, cysteine 186, cysteine 209, and cysteine 213. Positions 123 to 155 (CSYCGIHDPACVVYCNTSKKWFCNGRGNTSGSH) are C3H. Residues 137-165 (CNTSKKWFCNGRGNTSGSHIVNHLVRAKC) form a CC/SHH/C region. Positions 183-213 (CYNCGCRNVFLLGFIPAKADSVVVLLCRQPC) are C4. ATP is bound by residues glutamine 486 and 506 to 510 (GTGKT). Serine 565 carries the phosphoserine modification. Glutamine 676, tyrosine 713, and glutamate 844 together coordinate ATP. Phosphoserine is present on serine 956. Disordered stretches follow at residues 1009 to 1058 (FGQA…VASQ) and 1073 to 1096 (SQPSQMSQPGLSQPELSQDSYLGD). Position 1019 is an omega-N-methylarginine (arginine 1019). Residues 1025–1034 (KTGRGGRQKN) show a composition bias toward basic residues. The span at 1041-1058 (PSQTNLPNSQASQDVASQ) shows a compositional bias: polar residues. The span at 1073–1086 (SQPSQMSQPGLSQP) shows a compositional bias: low complexity. A phosphoserine mark is found at serine 1089, serine 1107, serine 1110, and serine 1127. 2 consecutive short sequence motifs ([ST]-Q motif) follow at residues 1089–1090 (SQ) and 1107–1108 (SQ). The interval 1110-1129 (STYQGERAYQHGGVTGLSQY) is disordered.

The protein belongs to the DNA2/NAM7 helicase family. In terms of assembly, found in a post-splicing messenger ribonucleoprotein (mRNP) complex. Associates with the exon junction complex (EJC). Associates with the SGM1C complex; is phosphorylated by the complex kinase component SGM1. Part of a complex composed of SMG1, DHX34 and UPF1; within the complex DHX34 acts as a scaffolding protein to facilitate SMG1 phosphorylation of UPF1. Interacts with UPF2. Interacts with UPF3A and UPF3B. Interacts with EST1A. Interacts with SLBP. Interacts (when hyperphosphorylated) with PNRC2. Interacts with AGO1 and AGO2. Interacts with GSPT2. Interacts with isoform 1 and isoform 5 of ADAR/ADAR1. Interacts with SMG7. Interacts with ZC3H12A; this interaction occurs in a mRNA translationally active- and termination-dependent manner and is essential for ZC3H12A-mediated degradation of target mRNAs. Interacts with CPSF6. Interacts with MOV10; the interaction is direct and RNA-dependent. Interacts with SHFL; the interaction increases in the presence of RNA. Interacts with UPF2 and DDX4; interactions are mediated by TDRD6. Interacts with DHX34 and PABPC1/PABP1; the interactions are RNA-independent. Interacts with RBM46. (Microbial infection) Interacts with human T-cell leukemia virus 1/HTLV-1 protein Tax; this interaction inhibits the host nonsense-mediated mRNA decay (NMD). Phosphorylated by SMG1; required for formation of mRNA surveillance complexes. Ubiquitous.

It localises to the cytoplasm. The protein resides in the P-body. The protein localises to the nucleus. It is found in the perinuclear region. It carries out the reaction ATP + H2O = ADP + phosphate + H(+). Functionally, RNA-dependent helicase required for nonsense-mediated decay (NMD) of aberrant mRNAs containing premature stop codons and modulates the expression level of normal mRNAs. Is recruited to mRNAs upon translation termination and undergoes a cycle of phosphorylation and dephosphorylation; its phosphorylation appears to be a key step in NMD. Recruited by release factors to stalled ribosomes together with the SMG1C protein kinase complex to form the transient SURF (SMG1-UPF1-eRF1-eRF3) complex. In EJC-dependent NMD, the SURF complex associates with the exon junction complex (EJC) (located 50-55 or more nucleotides downstream from the termination codon) through UPF2 and allows the formation of an UPF1-UPF2-UPF3 surveillance complex which is believed to activate NMD. Phosphorylated UPF1 is recognized by EST1B/SMG5, SMG6 and SMG7 which are thought to provide a link to the mRNA degradation machinery involving exonucleolytic and endonucleolytic pathways, and to serve as adapters to protein phosphatase 2A (PP2A), thereby triggering UPF1 dephosphorylation and allowing the recycling of NMD factors. UPF1 can also activate NMD without UPF2 or UPF3, and in the absence of the NMD-enhancing downstream EJC indicative for alternative NMD pathways. Plays a role in replication-dependent histone mRNA degradation at the end of phase S; the function is independent of UPF2. For the recognition of premature termination codons (PTC) and initiation of NMD a competitive interaction between UPF1 and PABPC1 with the ribosome-bound release factors is proposed. The ATPase activity of UPF1 is required for disassembly of mRNPs undergoing NMD. Together with UPF2 and dependent on TDRD6, mediates the degradation of mRNA harboring long 3'UTR by inducing the NMD machinery. Also capable of unwinding double-stranded DNA and translocating on single-stranded DNA. This Homo sapiens (Human) protein is Regulator of nonsense transcripts 1.